The primary structure comprises 293 residues: Protein boule-like (293 aa).

Positions 1 to 16 (METESRAQSTNQTQTD) are enriched in polar residues. The tract at residues 1 to 39 (METESRAQSTNQTQTDSLSPSPNPVSPVPLNNPTSGPRY) is disordered. A phosphoserine mark is found at Ser-19, Ser-21, and Ser-26. Residues 45-122 (NRIFVGGIDF…KKLNIGPAIR (78 aa)) form the RRM domain. Positions 172 to 196 (PSRSISSSPVMVAQPVYQQPAYHYQ) constitute a DAZ domain.

Belongs to the RRM DAZ family. Interacts with DAZ1 and DAZL. Testis specific. Not expressed in early embryos, primoridal germ cells and spermatogonial cells. First expressed in the cytoplasm of spermatocytes and then persists through meiosis.

The protein resides in the cytoplasm. In terms of biological role, probable RNA-binding protein, which may be required during spermatogenesis. May act by binding to the 3'-UTR of mRNAs and regulating their translation. The chain is Protein boule-like from Mus musculus (Mouse).